A 151-amino-acid polypeptide reads, in one-letter code: UPF0178 protein Suden_0449 (151 aa).

Belongs to the UPF0178 family.

The protein is UPF0178 protein Suden_0449 of Sulfurimonas denitrificans (strain ATCC 33889 / DSM 1251) (Thiomicrospira denitrificans (strain ATCC 33889 / DSM 1251)).